A 423-amino-acid polypeptide reads, in one-letter code: F-box/LRR-repeat protein 2 (423 aa).

The F-box domain maps to 9-55 (GRINKKLPKELLLRIFSFLDIVTLCRCAQISKAWNILALDGSNWQRI). LRR repeat units lie at residues 61 to 87 (QTDV…SLRG), 88 to 113 (CIGV…NLNG), 114 to 139 (CTKI…DLTS), 140 to 165 (CVSI…NLSW), 166 to 191 (CDQI…LLRG), 192 to 217 (CTQL…NLQS), 218 to 243 (CSRI…CLSG), 244 to 269 (CSNL…EAAR), 270 to 295 (CSHL…DLEE), 296 to 321 (CILI…SLSH), 322 to 350 (CELI…ELDN), 351 to 375 (CLLI…ELYD), and 376 to 401 (CQQV…AYFA). Residues 80 to 90 (LRKLSLRGCIG) form an interaction with Calmodulin region. A Glycyl lysine isopeptide (Lys-Gly) (interchain with G-Cter in ubiquitin) cross-link involves residue lysine 201. Position 404 is a phosphothreonine (threonine 404). The S-geranylgeranyl cysteine moiety is linked to residue cysteine 420. The short motif at 420–423 (CVIL) is the CAAX motif element.

In terms of assembly, part of the SCF (SKP1-CUL1-F-box) E3 ubiquitin-protein ligase complex SCF(FBXL2) composed of CUL1, SKP1, RBX1 and FBXL2. Interacts with calmodulin; may antagonize substrate ubiquitination by SCF(FBXL2). May interact with PIK3R1. Interacts with PTPN13. In terms of processing, phosphorylated by GSK-beta (GSK3B), promoting recognition by FBXO3, leading to its ubiquitination by the SCF(FBXO3) complex. Post-translationally, ubiquitinated at Lys-201 by the SCF(FBXO3) complex in response to lipopolysaccharide (LPS), leading to its degradation by the proteasome.

The protein localises to the membrane. The protein operates within protein modification; protein ubiquitination. Functionally, calcium-activated substrate recognition component of the SCF (SKP1-cullin-F-box protein) E3 ubiquitin-protein ligase complex, SCF(FBXL2), which mediates the ubiquitination and subsequent proteasomal degradation of target proteins. Unlike many F-box proteins, FBXL2 does not seem to target phosphodegron within its substrates but rather calmodulin-binding motifs and is thereby antagonized by calmodulin. This is the case for the cyclins CCND2 and CCND3 which polyubiquitination and subsequent degradation are inhibited by calmodulin. Through CCND2 and CCND3 degradation induces cell-cycle arrest in G(0). SCF(FBXL2) also mediates PIK3R2 ubiquitination and proteasomal degradation thereby regulating phosphatidylinositol 3-kinase signaling and autophagy. PCYT1A monoubiquitination by SCF(FBXL2) and subsequent degradation regulates synthesis of phosphatidylcholine, which is utilized for formation of membranes and of pulmonary surfactant. The SCF(FBXL2) complex acts as a regulator of inflammation by mediating ubiquitination and degradation of TRAF proteins (TRAF1, TRAF2, TRAF3, TRAF4, TRAF5 and TRAF6). The SCF(FBXL2) complex acts as a negative regulator of the NLRP3 inflammasome by mediating ubiquitination and degradation of NLRP3. In Pongo abelii (Sumatran orangutan), this protein is F-box/LRR-repeat protein 2.